The sequence spans 588 residues: MRHRQDNLLANRTLLPGMASGQYVFRLCTFSPVVRYFSLLPCLCILSFSSPAAMLSPGDRSAIQQQQQQLLDENQRQRDALERSAPLTITPSPETSAGTEGPCFTVSSIVVSGATRLTSAETDRLVAPWVNQCLNITGLTAVTDAMTDSYIRRGYITSRAFLTEQDLSGGVLHITVMEGRLQQIRAEGADLPARTLKMVFPGMEGKVLNLRDIEQGMEQINRLRTEPVQIEISPGDREGWSVVTLTALPEWPVTGSVGIDNSGQKSTGTGQLNGVLSFNNPLGLADNWFVSGGRSSDFSVSHDARNFAAGVSLPYGYTLVDYTYSWSDYLSTIDNRGWRWRSTGDLQTHRLGLSHVLFRNGDMKTALTGGLQHRIIHNYLDDVLLQGSSRKLTSFSVGLNHTHKFLGGVGTLNPVFTRGMPWFGAESDHGKRGDLPVNQFRKWSVSASFQRPVTDRVWWLTSAYAQWSPDRLHGVEQLSLGGESSVRGFKDQYISGNNGGYLRNELSWSLFSLPYVGTVRAVAALDGGWLHSDSDDPYSSGTLWGAAAGLSTTSGHVSGSFTAGLPLVYPDWLAPDHLTVYWRVAVAF.

In terms of domain architecture, POTRA spans 104-179 (FTVSSIVVSG…GVLHITVMEG (76 aa)).

Belongs to the TPS (TC 1.B.20) family.

It localises to the cell outer membrane. Its function is as follows. Potential outer membrane protein component of a toxin-immunity protein module, which functions as a cellular contact-dependent growth inhibition (CDI) system. CDI modules allow bacteria to communicate with and inhibit the growth of closely related neighboring bacteria in a contact-dependent fashion. This protein may be required for secretion and assembly of the CdiA toxin protein. Inhibitory cells must be in logarithmic (not stationary) phase to inhibit growth of their targets, while the presence of P or S but not type 1 pili protects the target cells against growth inhibition. Functionally, probable member of a two partner secretion pathway (TPS) in which it mediates the secretion of CdiA. This Escherichia coli protein is Outer membrane transporter CdiB.